The sequence spans 237 residues: Protein FEV (237 aa).

Residues 47 to 127 (IQLWQFLLEL…HGKRYAYRFD (81 aa)) constitute a DNA-binding region (ETS). The interval 129-237 (QGLAQACQPP…AASHLGGHYH (109 aa)) is may mediate active transcriptional repression.

The protein belongs to the ETS family. In terms of tissue distribution, expressed in central serotonergic neurons.

It localises to the nucleus. Functions as a transcriptional regulator. May function as a transcriptional repressor. Functions in the differentiation and the maintenance of the central serotonergic neurons. May play a role in cell growth. This chain is Protein FEV (Fev), found in Mus musculus (Mouse).